The following is a 295-amino-acid chain: Biliverdin reductase A (295 aa).

Positions 1 to 2 are excised as a propeptide; that stretch reads MS. Residues 18 to 19, 76 to 79, and Y97 contribute to the NAD(+) site; these read RA and SSSH. S154 bears the Phosphoserine mark. S167 serves as a coordination point for NAD(+). The residue at position 173 (T173) is a Phosphothreonine. Residues S177 and S229 each carry the phosphoserine modification. An N6-acetyllysine mark is found at K247 and K252. Residues H279, C280, C291, and H292 each contribute to the Zn(2+) site.

It belongs to the Gfo/Idh/MocA family. Biliverdin reductase subfamily. Monomer. Zn(2+) is required as a cofactor.

The protein localises to the cytoplasm. It localises to the cytosol. The enzyme catalyses (4Z,15Z)-bilirubin IXalpha + NAD(+) = biliverdin IXalpha + NADH + H(+). It catalyses the reaction (4Z,15Z)-bilirubin IXalpha + NADP(+) = biliverdin IXalpha + NADPH + H(+). It participates in porphyrin-containing compound metabolism; protoheme degradation. Reduces the gamma-methene bridge of the open tetrapyrrole, biliverdin IXalpha, to bilirubin with the concomitant oxidation of a NADH or NADPH cofactor. Does not reduce bilirubin IXbeta. Uses the reactants NADH or NADPH depending on the pH; NADH is used at the acidic pH range (6-6.9) and NADPH at the alkaline range (8.5-8.7). NADPH, however, is the probable reactant in biological systems. This Mus musculus (Mouse) protein is Biliverdin reductase A.